The primary structure comprises 244 residues: ATP synthase subunit a (244 aa).

7 helical membrane-spanning segments follow: residues 20–40, 81–101, 113–133, 140–160, 176–196, 202–222, and 223–243; these read FFDV…VIVI, GILF…LNVM, QLLV…IWGF, FLNI…LVFI, LFAN…AAIY, FIGI…LGIA, and FLQA…IINL.

Belongs to the ATPase A chain family. In terms of assembly, F-type ATPases have 2 components, CF(1) - the catalytic core - and CF(0) - the membrane proton channel. CF(1) has five subunits: alpha(3), beta(3), gamma(1), delta(1), epsilon(1). CF(0) has three main subunits: a, b and c.

It localises to the mitochondrion inner membrane. Functionally, mitochondrial membrane ATP synthase (F(1)F(0) ATP synthase or Complex V) produces ATP from ADP in the presence of a proton gradient across the membrane which is generated by electron transport complexes of the respiratory chain. F-type ATPases consist of two structural domains, F(1) - containing the extramembraneous catalytic core and F(0) - containing the membrane proton channel, linked together by a central stalk and a peripheral stalk. During catalysis, ATP synthesis in the catalytic domain of F(1) is coupled via a rotary mechanism of the central stalk subunits to proton translocation. Key component of the proton channel; it may play a direct role in the translocation of protons across the membrane. This is ATP synthase subunit a (atp6) from Dictyostelium citrinum (Slime mold).